Consider the following 946-residue polypeptide: MAVYCYALNSLVIMNSANEMKSGGGPGPSGSETPPPPRRAVLSPGSVFSPGRGASFLFPPAESLSPEEPRSPGGWRSGRRRLNSSSGSGSGSSGSSVSSPSWAGRLRGDRQQVVAAGTLSPPGPEEAKRKLRILQRELQNVQVNQKVGMFEAHIQAQSSAIQAPRSPRLGRARSPSPCPFRSSSQPPGRVLVQGARSEERRTKSWGEQCPETSGTDSGRKGGPSLCSSQVKKGMPPLPGRAAPTGSEAQGPSAFVRMEKGIPASPRCGSPTAMEIDKRGSPTPGTRSCLAPSLGLFGASLTMATEVAARVTSTGPHRPQDLALTEPSGRARELEDLQPPEALVERQGQFLGSETSPAPERGGPRDGEPPGKMGKGYLPCGMPGSGEPEVGKRPEETTVSVQSAESSDSLSWSRLPRALASVGPEEARSGAPVGGGRWQLSDRVEGGSPTLGLLGGSPSAQPGTGNVEAGIPSGRMLEPLPCWDAAKDLKEPQCPPGDRVGVQPGNSRVWQGTMEKAGLAWTRGTGVQSEGTWESQRQDSDALPSPELLPQDPDKPFLRKACSPSNIPAVIITDMGTQEDGALEETQGSPRGNLPLRKLSSSSASSTGFSSSYEDSEEDISSDPERTLDPNSAFLHTLDQQKPRVSKSWRKIKNMVHWSPFVMSFKKKYPWIQLAGHAGSFKAAANGRILKKHCESEQRCLDRLMVDVLRPFVPAYHGDVVKDGERYNQMDDLLADFDSPCVMDCKMGIRTYLEEELTKARKKPSLRKDMYQKMIEVDPEAPTEEEKAQRAVTKPRYMQWRETISSTATLGFRIEGIKKEDGTVNRDFKKTKTREQVTEAFREFTKGNHNILIAYRDRLKAIRTTLEVSPFFKCHEVIGSSLLFIHDKKEQAKVWMIDFGKTTPLPEGQTLQHDVPWQEGNREDGYLSGLNNLVDILTEMSQDAPLA.

Disordered stretches follow at residues 19-128, 156-288, 308-472, 486-561, and 580-638; these read EMKS…EEAK, AQSS…TRSC, ARVT…GIPS, KDLK…RKAC, and GALE…HTLD. 3 positions are modified to phosphoserine: S43, S49, and S71. A compositionally biased stretch (low complexity) spans 83-105; that stretch reads NSSSGSGSGSSGSSVSSPSWAGR. Phosphoserine occurs at positions 204 and 269. Positions 396–411 are enriched in polar residues; it reads TTVSVQSAESSDSLSW. A compositionally biased stretch (low complexity) spans 445-458; sequence GGSPTLGLLGGSPS. The span at 524–534 shows a compositional bias: polar residues; that stretch reads TGVQSEGTWES. Positions 599–612 are enriched in low complexity; that stretch reads SSSSASSTGFSSSY. Residues S679, K690, 730 to 732, and D743 each bind ATP; that span reads DDL. Residues K745 and R766 each coordinate substrate. A calmodulin-binding region spans residues 768–776; the sequence is DMYQKMIEV. 793–800 contributes to the substrate binding site; the sequence is KPRYMQWR. ATP-binding residues include K817 and D897. K900 provides a ligand contact to substrate.

It belongs to the inositol phosphokinase (IPK) family. As to quaternary structure, interacts with DMTN.

The protein localises to the cytoplasm. It localises to the cytoskeleton. It is found in the endoplasmic reticulum. The enzyme catalyses 1D-myo-inositol 1,4,5-trisphosphate + ATP = 1D-myo-inositol 1,3,4,5-tetrakisphosphate + ADP + H(+). Its activity is regulated as follows. IP3K is activated by calcium and calmodulin. Form B is much more sensitive to calcium/calmodulin than form A. Functionally, catalyzes the phosphorylation of 1D-myo-inositol 1,4,5-trisphosphate (InsP3) into 1D-myo-inositol 1,3,4,5-tetrakisphosphate and participates to the regulation of calcium homeostasis. The protein is Inositol-trisphosphate 3-kinase B of Homo sapiens (Human).